Here is a 65-residue protein sequence, read N- to C-terminus: Protein C' (65 aa).

Belongs to the rhabdoviruses C protein family.

In terms of biological role, seems to stimulates transcription by the viral polymerase. May play a role in viral pathogenesis or transmission by insects vectors. The chain is Protein C' (P) from Vesicular stomatitis New Jersey virus (strain Missouri subtype Hazelhurst) (VSNJV).